Consider the following 814-residue polypeptide: Plakophilin-2 (814 aa).

Residues 1–329 (MAIPGSLGEC…MTLERAVNML (329 aa)) form a required for binding to single-stranded DNA region. Serine 44 is modified (phosphoserine). Arginine 46 carries the omega-N-methylarginine modification. Residues serine 82 and serine 130 each carry the phosphoserine modification. ARM repeat units follow at residues 200–240 (TCQH…SIKG), 309–352 (CDCL…ESFQ), 354–393 (SEAR…NLVF), 503–549 (PDGR…NLSY), 604–644 (PRGI…NLTA), 652–691 (SVAR…NLSR), 696–737 (QNEI…NLMQ), and 740–782 (YQNA…SLWA).

It belongs to the beta-catenin family. Interacts with DSC2. Interacts with JUP. Interacts with KRT5/CK5, KRT8/CK8, KRT14/CK14, KRT18/CK18 and VIM. Interacts (via N-terminus) with MARK3/C-TAK1. Interacts with DSP. Interacts with DSG1, DSG2 and DSG3. Interacts (via N-terminus) with CTNNB1. Interacts with CDH1. Interacts with the RNA polymerase III (Pol III) complex proteins POLR3A/RPC155, POLR3F/RPC39 and POLR3C/RPC82. Interacts with CTNNA3. Interacts (via N-terminus) with SCN5A/Nav1.5. Interacts with ANK3/ANKG and GJA1/CX43. In terms of tissue distribution, expressed in the heart (at protein level).

It localises to the nucleus. It is found in the cell junction. The protein resides in the desmosome. The protein localises to the cytoplasm. A component of desmosome cell-cell junctions which are required for positive regulation of cellular adhesion. Regulates focal adhesion turnover resulting in changes in focal adhesion size, cell adhesion and cell spreading, potentially via transcriptional modulation of beta-integrins. Required to maintain gingival epithelial barrier function. Important component of the desmosome that is also required for localization of desmosome component proteins such as DSC2, DSG2 and JUP to the desmosome cell-cell junction. Required for the formation of desmosome cell junctions in cardiomyocytes, thereby required for the correct formation of the heart, specifically trabeculation and formation of the atria walls. Loss of desmosome cell junctions leads to mis-localization of DSP and DSG2 resulting in disruption of cell-cell adhesion and disordered intermediate filaments. Modulates profibrotic gene expression in cardiomyocytes via regulation of DSP expression and subsequent activation of downstream TGFB1 and MAPK14/p38 MAPK signaling. Required for cardiac sodium current propagation and electrical synchrony in cardiac myocytes, via ANK3 stabilization and modulation of SCN5A/Nav1.5 localization to cell-cell junctions. Required for mitochondrial function, nuclear envelope integrity and positive regulation of SIRT3 transcription via maintaining DES localization at its nuclear envelope and cell tip anchoring points, and thereby preserving regulation of the transcriptional program. Maintenance of nuclear envelope integrity protects against DNA damage and transcriptional dysregulation of genes, especially those involved in the electron transport chain, thereby preserving mitochondrial function and protecting against superoxide radical anion generation. Binds single-stranded DNA (ssDNA). May regulate the localization of GJA1 to gap junctions in intercalated disks of the heart. The polypeptide is Plakophilin-2 (Rattus norvegicus (Rat)).